Reading from the N-terminus, the 217-residue chain is tRNA (guanine-N(7)-)-methyltransferase (217 aa).

4 residues coordinate S-adenosyl-L-methionine: Glu-46, Glu-71, Asp-98, and Asp-120. Asp-120 is an active-site residue. Lys-124 serves as a coordination point for substrate. The interaction with RNA stretch occupies residues 126-131; sequence RHEKRR. Substrate contacts are provided by residues Asp-156 and 196-199; that span reads TEYE.

This sequence belongs to the class I-like SAM-binding methyltransferase superfamily. TrmB family.

It carries out the reaction guanosine(46) in tRNA + S-adenosyl-L-methionine = N(7)-methylguanosine(46) in tRNA + S-adenosyl-L-homocysteine. It functions in the pathway tRNA modification; N(7)-methylguanine-tRNA biosynthesis. Its function is as follows. Catalyzes the formation of N(7)-methylguanine at position 46 (m7G46) in tRNA. The polypeptide is tRNA (guanine-N(7)-)-methyltransferase (Lactobacillus gasseri (strain ATCC 33323 / DSM 20243 / BCRC 14619 / CIP 102991 / JCM 1131 / KCTC 3163 / NCIMB 11718 / NCTC 13722 / AM63)).